We begin with the raw amino-acid sequence, 412 residues long: Multifunctional CCA protein (412 aa).

Residues glycine 8 and arginine 11 each contribute to the ATP site. Positions 8 and 11 each coordinate CTP. Aspartate 21 and aspartate 23 together coordinate Mg(2+). ATP contacts are provided by arginine 91, arginine 137, and arginine 140. CTP is bound by residues arginine 91, arginine 137, and arginine 140. The HD domain occupies 226 to 327 (TGIHTMMVID…VTLFEKTDAL (102 aa)).

Belongs to the tRNA nucleotidyltransferase/poly(A) polymerase family. Bacterial CCA-adding enzyme type 1 subfamily. In terms of assembly, monomer. Can also form homodimers and oligomers. Mg(2+) is required as a cofactor. The cofactor is Ni(2+).

It catalyses the reaction a tRNA precursor + 2 CTP + ATP = a tRNA with a 3' CCA end + 3 diphosphate. The catalysed reaction is a tRNA with a 3' CCA end + 2 CTP + ATP = a tRNA with a 3' CCACCA end + 3 diphosphate. Functionally, catalyzes the addition and repair of the essential 3'-terminal CCA sequence in tRNAs without using a nucleic acid template. Adds these three nucleotides in the order of C, C, and A to the tRNA nucleotide-73, using CTP and ATP as substrates and producing inorganic pyrophosphate. tRNA 3'-terminal CCA addition is required both for tRNA processing and repair. Also involved in tRNA surveillance by mediating tandem CCA addition to generate a CCACCA at the 3' terminus of unstable tRNAs. While stable tRNAs receive only 3'-terminal CCA, unstable tRNAs are marked with CCACCA and rapidly degraded. This is Multifunctional CCA protein from Dechloromonas aromatica (strain RCB).